The following is a 105-amino-acid chain: Large ribosomal subunit protein eL42 (105 aa).

The interval 23-52 (KVTQYKKGKESRLAQGRRRYDSKQKGFGGQ) is disordered. The span at 29 to 46 (KGKESRLAQGRRRYDSKQ) shows a compositional bias: basic and acidic residues.

It belongs to the eukaryotic ribosomal protein eL42 family.

The chain is Large ribosomal subunit protein eL42 (rpl-44) from Brugia malayi (Filarial nematode worm).